Here is a 117-residue protein sequence, read N- to C-terminus: MARIAGINIPTHKHIVIGLQSIFGIGDTRAREICITLKLDPVTKVANITENQLELIRVEIAKYEVEGDLRRQLAMDIKRLKDLGCYRGVRHRKSLPLRGQRTKTNARTRKGPRRLIK.

Residues 94–117 (SLPLRGQRTKTNARTRKGPRRLIK) form a disordered region.

It belongs to the universal ribosomal protein uS13 family. Part of the 30S ribosomal subunit. Forms a loose heterodimer with protein S19. Forms two bridges to the 50S subunit in the 70S ribosome.

Its function is as follows. Located at the top of the head of the 30S subunit, it contacts several helices of the 16S rRNA. In the 70S ribosome it contacts the 23S rRNA (bridge B1a) and protein L5 of the 50S subunit (bridge B1b), connecting the 2 subunits; these bridges are implicated in subunit movement. Contacts the tRNAs in the A and P-sites. This Vesicomyosocius okutanii subsp. Calyptogena okutanii (strain HA) protein is Small ribosomal subunit protein uS13.